The following is a 103-amino-acid chain: Pterin-4-alpha-carbinolamine dehydratase 2 (103 aa).

It belongs to the pterin-4-alpha-carbinolamine dehydratase family. Highest level found in the kidney, liver, heart and ovarian follicles.

It catalyses the reaction (4aS,6R)-4a-hydroxy-L-erythro-5,6,7,8-tetrahydrobiopterin = (6R)-L-erythro-6,7-dihydrobiopterin + H2O. Its function is as follows. Involved in tetrahydrobiopterin biosynthesis. Seems to both prevent the formation of 7-pterins and accelerate the formation of quinonoid-BH2. In terms of biological role, regulates the dimerization of homeodomain protein HNF-1-alpha and enhances its transcriptional activity. The chain is Pterin-4-alpha-carbinolamine dehydratase 2 (PCBD2) from Gallus gallus (Chicken).